A 269-amino-acid chain; its full sequence is Tryptophan synthase alpha chain (269 aa).

Catalysis depends on proton acceptor residues Glu-49 and Asp-60.

It belongs to the TrpA family. As to quaternary structure, tetramer of two alpha and two beta chains.

The catalysed reaction is (1S,2R)-1-C-(indol-3-yl)glycerol 3-phosphate + L-serine = D-glyceraldehyde 3-phosphate + L-tryptophan + H2O. It participates in amino-acid biosynthesis; L-tryptophan biosynthesis; L-tryptophan from chorismate: step 5/5. Functionally, the alpha subunit is responsible for the aldol cleavage of indoleglycerol phosphate to indole and glyceraldehyde 3-phosphate. This is Tryptophan synthase alpha chain from Pseudomonas fluorescens (strain SBW25).